The primary structure comprises 766 residues: Phosphoribosylformylglycinamidine synthase subunit PurL (766 aa).

His-66 is a catalytic residue. ATP is bound by residues Tyr-69 and Lys-113. Position 115 (Glu-115) interacts with Mg(2+). Residues 116–119 and Arg-138 contribute to the substrate site; that span reads SHNH. The Proton acceptor role is filled by His-117. Asp-139 contributes to the Mg(2+) binding site. Residue Gln-264 coordinates substrate. Asp-292 contributes to the Mg(2+) binding site. A substrate-binding site is contributed by 336–338; that stretch reads ESQ. ATP is bound by residues Asn-524 and Gly-561. Asn-562 contacts Mg(2+). Residue Ser-564 participates in substrate binding.

It belongs to the FGAMS family. In terms of assembly, monomer. Part of the FGAM synthase complex composed of 1 PurL, 1 PurQ and 2 PurS subunits.

It is found in the cytoplasm. The enzyme catalyses N(2)-formyl-N(1)-(5-phospho-beta-D-ribosyl)glycinamide + L-glutamine + ATP + H2O = 2-formamido-N(1)-(5-O-phospho-beta-D-ribosyl)acetamidine + L-glutamate + ADP + phosphate + H(+). The protein operates within purine metabolism; IMP biosynthesis via de novo pathway; 5-amino-1-(5-phospho-D-ribosyl)imidazole from N(2)-formyl-N(1)-(5-phospho-D-ribosyl)glycinamide: step 1/2. Its function is as follows. Part of the phosphoribosylformylglycinamidine synthase complex involved in the purines biosynthetic pathway. Catalyzes the ATP-dependent conversion of formylglycinamide ribonucleotide (FGAR) and glutamine to yield formylglycinamidine ribonucleotide (FGAM) and glutamate. The FGAM synthase complex is composed of three subunits. PurQ produces an ammonia molecule by converting glutamine to glutamate. PurL transfers the ammonia molecule to FGAR to form FGAM in an ATP-dependent manner. PurS interacts with PurQ and PurL and is thought to assist in the transfer of the ammonia molecule from PurQ to PurL. The chain is Phosphoribosylformylglycinamidine synthase subunit PurL from Mycobacterium bovis (strain BCG / Pasteur 1173P2).